Here is a 536-residue protein sequence, read N- to C-terminus: Ecdysone receptor (536 aa).

The tract at residues 1 to 114 is modulating; sequence MKTENLIVTT…GPVPRQQEEL (114 aa). The disordered stretch occupies residues 77-107; it reads SPNSKLDDGNMSVHMGDGLDGKKSSSKKGPV. 2 consecutive NR C4-type zinc fingers follow at residues 115-135 and 151-175; these read CLVCGDRASGYHYNALTCEGC and CKFGHECEMDMYMRRKCQECRLKKC. The nuclear receptor DNA-binding region spans 115-187; sequence CLVCGDRASG…VGMRPECVVP (73 aa). The NR LBD domain occupies 278-514; the sequence is NQVAVIYKLI…FLEEVWDVGD (237 aa).

It belongs to the nuclear hormone receptor family. NR1 subfamily.

Its subcellular location is the nucleus. Its function is as follows. Receptor for ecdysone. Binds to ecdysone response elements (ECRES). This Chironomus tentans (Midge) protein is Ecdysone receptor (EcR).